The sequence spans 143 residues: Peptide methionine sulfoxide reductase MsrB (143 aa).

The MsrB domain occupies 16-139; that stretch reads DAELRRRLTP…NSAALNFESR (124 aa). Zn(2+) contacts are provided by cysteine 55, cysteine 58, cysteine 104, and cysteine 107. The active-site Nucleophile is cysteine 128.

Belongs to the MsrB Met sulfoxide reductase family. It depends on Zn(2+) as a cofactor.

The catalysed reaction is L-methionyl-[protein] + [thioredoxin]-disulfide + H2O = L-methionyl-(R)-S-oxide-[protein] + [thioredoxin]-dithiol. The chain is Peptide methionine sulfoxide reductase MsrB from Burkholderia ambifaria (strain MC40-6).